A 584-amino-acid polypeptide reads, in one-letter code: Cytosolic Fe-S cluster assembly factor NAR1 (584 aa).

[4Fe-4S] cluster is bound by residues cysteine 20, cysteine 81, cysteine 84, cysteine 87, cysteine 190, cysteine 245, cysteine 465, and cysteine 469.

It belongs to the NARF family.

Its function is as follows. Component of the cytosolic Fe/S protein assembly machinery. Required for maturation of extramitochondrial Fe/S proteins. May play a role in the transfer of pre-assembled Fe/S clusters to target apoproteins. The chain is Cytosolic Fe-S cluster assembly factor NAR1 (NAR1) from Candida dubliniensis (strain CD36 / ATCC MYA-646 / CBS 7987 / NCPF 3949 / NRRL Y-17841) (Yeast).